We begin with the raw amino-acid sequence, 808 residues long: Sucrose synthase 1 (808 aa).

Residues 277–754 (MVFNVVILSP…GLQRIEEKYT (478 aa)) are GT-B glycosyltransferase.

The protein belongs to the glycosyltransferase 1 family. Plant sucrose synthase subfamily. Homotetramer. Expressed in the phloem of leaves and in roots. Detected in the whole plant but more precisely confined to the vasculature in cotyledons, mature leaves and siliques.

The catalysed reaction is an NDP-alpha-D-glucose + D-fructose = a ribonucleoside 5'-diphosphate + sucrose + H(+). Functionally, sucrose-cleaving enzyme that provides UDP-glucose and fructose for various metabolic pathways. In Arabidopsis thaliana (Mouse-ear cress), this protein is Sucrose synthase 1 (SUS1).